The primary structure comprises 383 residues: UDP-D-xylose:L-fucose alpha-1,3-D-xylosyltransferase 3 (383 aa).

Residues 1 to 20 (MAQQSQRPISNRHISLLNRN) are Cytoplasmic-facing. The helical; Signal-anchor for type II membrane protein transmembrane segment at 21–41 (GLILLLLLALFVILGVFLPLT) threads the bilayer. Over 42–383 (KSSLFMFPNT…KNRGKKHKLP (342 aa)) the chain is Lumenal. N-linked (GlcNAc...) asparagine glycosylation is found at N50, N82, and N157. The DXD motif motif lies at 180–182 (DVD). Residues N212, N258, N301, N306, N357, and N364 are each glycosylated (N-linked (GlcNAc...) asparagine).

Belongs to the glycosyltransferase 77 family. It depends on Mn(2+) as a cofactor. Mg(2+) serves as cofactor. Post-translationally, glycosylated. Expressed around trichome support cells in the adaxial epidermis of rosette leaves, in cauline leaves, petals and both the proximal and distal ends of siliques.

It is found in the golgi apparatus membrane. Its function is as follows. Catalyzes the transfer of D-xylose from UDP-alpha-D-xylose onto L-fucose. Probably involved in the biosynthesis of rhamnogalacturonan II (RG-II) through xylosylation of the internal fucose moiety of the A-chain of RG-II, a structurally complex pectic polysaccharide of the primary cell wall. RG-II is essential for the cell wall integrity of rapidly growing tissues such as roots and pollen tube growth and elongation. The polypeptide is UDP-D-xylose:L-fucose alpha-1,3-D-xylosyltransferase 3 (Arabidopsis thaliana (Mouse-ear cress)).